The chain runs to 213 residues: MKNKLHRVGRCTASSSRWLYRHVNDPFVKKAKAEQYRSRAAYKLLEIDEKFNLIRKGFVVLELGSAPGGWSQVIADILNGTGRLIAVDLADMDPISGVEVVKLDIELQRKELYEYISGVELDVIVSDLAPSASGSRVTDSISSIRLAELVLHYAKNSLKKFGTVVTKILRGSEDEYRFVNSLRKQFKKIEYFKPDASRKASREIYLILLGKLS.

S-adenosyl-L-methionine contacts are provided by Gly68, Trp70, Asp88, Asp104, and Asp127. Lys167 (proton acceptor) is an active-site residue.

Belongs to the class I-like SAM-binding methyltransferase superfamily. RNA methyltransferase RlmE family.

The protein localises to the cytoplasm. It carries out the reaction uridine(2552) in 23S rRNA + S-adenosyl-L-methionine = 2'-O-methyluridine(2552) in 23S rRNA + S-adenosyl-L-homocysteine + H(+). Functionally, specifically methylates the uridine in position 2552 of 23S rRNA at the 2'-O position of the ribose in the fully assembled 50S ribosomal subunit. This is Ribosomal RNA large subunit methyltransferase E from Neorickettsia sennetsu (strain ATCC VR-367 / Miyayama) (Ehrlichia sennetsu).